A 306-amino-acid polypeptide reads, in one-letter code: Lipid A biosynthesis palmitoleoyltransferase (306 aa).

The helical transmembrane segment at 20–40 (WFGLGVLWLWVQLPYPVLCFL) threads the bilayer. An HXXXXD motif motif is present at residues 132 to 137 (HFMSLE).

It belongs to the LpxL/LpxM/LpxP family. LpxP subfamily.

It is found in the cell inner membrane. The catalysed reaction is (9Z)-hexadecenoyl-[ACP] + alpha-Kdo-(2-&gt;4)-alpha-Kdo-(2-&gt;6)-lipid IVA (E. coli) = (9Z)-hexadecenoyl-(Kdo)2-lipid IVA (E. coli) + holo-[ACP]. The protein operates within bacterial outer membrane biogenesis; lipopolysaccharide biosynthesis. Functionally, catalyzes the transfer of palmitoleate from palmitoleoyl-[acyl-carrier-protein] (ACP) to Kdo(2)-lipid IV(A) to form Kdo(2)-(palmitoleoyl)-lipid IV(A). Required for the biosynthesis of a distinct molecular species of lipid A, which is present only in cells grown at low temperatures. It may confer a selective advantage to cells growing at lower temperatures by making the outer membrane a more effective barrier to harmful chemicals. In Escherichia coli (strain K12), this protein is Lipid A biosynthesis palmitoleoyltransferase.